The chain runs to 1061 residues: Ribonuclease 3 (1061 aa).

Disordered regions lie at residues 1–20 and 149–244; these read MDFT…QIHQ and PLHS…SYNE. Over residues 156–173 the composition is skewed to basic and acidic residues; that stretch reads KTPERKENEEDSDSEIRS. 2 consecutive RNase III domains span residues 586–759 and 811–935; these read LSVF…LDSG and FHRL…VDKG. Mg(2+) contacts are provided by Glu851, Asp921, and Glu924. The region spanning 962-1037 is the DRBM domain; sequence DAKSHLQQWC…AENALAALEK (76 aa).

Belongs to the ribonuclease III family. The cofactor is Mg(2+). It depends on Mn(2+) as a cofactor.

It localises to the nucleus. It carries out the reaction Endonucleolytic cleavage to 5'-phosphomonoester.. Functionally, executes the initial step of microRNA (miRNA) processing in the nucleus, that is the cleavage of pri-miRNA to release pre-miRNA. Involved in pre-rRNA processing. Cleaves double-strand RNA and does not cleave single-strand RNA. Involved in fertility. Required for the function or synthesis of the let-7 miRNA. In Caenorhabditis briggsae, this protein is Ribonuclease 3.